We begin with the raw amino-acid sequence, 1130 residues long: Transmembrane channel-like protein 3 (1130 aa).

Residues 1–148 lie on the Cytoplasmic side of the membrane; that stretch reads MKTSKASQRY…ASYFIFLRWL (148 aa). A helical membrane pass occupies residues 149-169; sequence FGINIVLTVMTGAFVVLPELI. Topologically, residues 170-192 are extracellular; it reads AGQPFGSTASKTIPREQITSAQD. Residues 193-213 form a helical membrane-spanning segment; the sequence is LDTVWSLGGYLQYSVLFYGYY. The Cytoplasmic segment spans residues 214 to 225; it reads GRERRIGRAGYR. The helical transmembrane segment at 226-246 threads the bilayer; that stretch reads LPLAYFLVGMAVFAYSFIVLL. The Extracellular portion of the chain corresponds to 247-319; the sequence is KRMAKNSRTS…KNMAVTVCLR (73 aa). Asparagine 264 is a glycosylation site (N-linked (GlcNAc...) asparagine). The chain crosses the membrane as a helical span at residues 320 to 340; it reads IIANILVLLSLAGSIYLIYFV. The Cytoplasmic segment spans residues 341 to 361; the sequence is VDRSQKLEQSKKELTLWEKNE. A helical membrane pass occupies residues 362–382; sequence VSVVVSLVTMLAPSAFDLIAA. The Extracellular segment spans residues 383–393; sequence LEMYHPRTTLR. The helical transmembrane segment at 394 to 414 threads the bilayer; it reads FQLARVLVLYLGNLYSLIIAL. Topologically, residues 415-509 are cytoplasmic; the sequence is LDKVNSMNIE…CWETYVGQEM (95 aa). Residues 510-530 traverse the membrane as a helical segment; it reads LKLSVIDMLFTVASILLIDFF. At 531–570 the chain is on the extracellular side; that stretch reads RGLFVRYLSDYWCWDLESKFPEYGEFKIAENVLHLVYNQG. The helical transmembrane segment at 571-591 threads the bilayer; that stretch reads MIWMGAFFSPCLPAFNVLKLI. Over 592-619 the chain is Cytoplasmic; it reads GLMYLRSWAVLTCNVPHQQVFRASRSNN. The chain crosses the membrane as a helical span at residues 620-640; that stretch reads FYLAMLLFMLFLCMLPTIFAI. The Extracellular portion of the chain corresponds to 641–680; that stretch reads VHYKPSLNCGPFSGQEKIYDIVSETIENDFPTWFHAVVGH. The helical transmembrane segment at 681–701 threads the bilayer; sequence ISSPVVILPAVLLLFMLIYYL. At 702–1130 the chain is on the cytoplasmic side; it reads QSIARSLKLS…DLNDLICSNV (429 aa). 5 disordered regions span residues 742 to 774, 819 to 893, 999 to 1019, 1033 to 1059, and 1097 to 1116; these read DARQ…EESS, RSLP…FQPI, SSCF…KYQR, QLER…LKAR, and QGRF…KSRQ. The segment covering 747–767 has biased composition (polar residues); it reads GSATEAESSENSKPKTLQARI. Basic and acidic residues predominate over residues 840-850; the sequence is SRSRPEQDTNR. The span at 856-876 shows a compositional bias: polar residues; it reads CSSTSNLHKNRSCSSVTQTQP. Basic and acidic residues-rich tracts occupy residues 878 to 890 and 1006 to 1017; these read KDVR…RKDF and DRSENNTRDPKY. Residues 1097–1106 show a composition bias toward polar residues; the sequence is QGRFPRSASQ.

Belongs to the TMC family. In terms of tissue distribution, detected in most neuronal organs and also in some non-neuronal tissues.

It is found in the membrane. Functionally, probable component of an ion channel. Molecular function hasn't been characterized yet. The protein is Transmembrane channel-like protein 3 of Mus musculus (Mouse).